The following is an 816-amino-acid chain: Stemod-13(17)-ene synthase (816 aa).

A compositionally biased stretch (polar residues) spans 1-10; sequence MMLLSSSYSG. The tract at residues 1–24 is disordered; it reads MMLLSSSYSGGQFPGVSPLGTRPK. The Mg(2+) site is built by aspartate 553, aspartate 557, asparagine 698, threonine 702, and glutamate 706. The DDXXD motif signature appears at 553–557; the sequence is DDFFD.

The protein belongs to the terpene synthase family. It depends on Mg(2+) as a cofactor.

The catalysed reaction is 9alpha-copalyl diphosphate = stemod-13(17)-ene + diphosphate. Its function is as follows. Catalyzes the conversion of syn-copalyl diphosphate to stemodene. This chain is Stemod-13(17)-ene synthase (KSL11), found in Oryza sativa subsp. indica (Rice).